The chain runs to 243 residues: UPF0502 protein H16_B1091 (243 aa).

The tract at residues 1-23 (MQSNHDSDASQAGDRPARPALRP) is disordered.

It belongs to the UPF0502 family.

The sequence is that of UPF0502 protein H16_B1091 from Cupriavidus necator (strain ATCC 17699 / DSM 428 / KCTC 22496 / NCIMB 10442 / H16 / Stanier 337) (Ralstonia eutropha).